The following is an 82-amino-acid chain: Conotoxin Tx6.6 (82 aa).

Positions 1–19 (MKLTCVMIVAVLFLTAWTL) are cleaved as a signal peptide. Positions 20 to 51 (VMADDSNNGLANLFSKLRDEMEDPEGSKLEKK) are excised as a propeptide. 3 disulfides stabilise this stretch: Cys53/Cys71, Cys60/Cys76, and Cys70/Cys81. Ala82 is modified (alanine amide; partial).

Belongs to the O1 superfamily. In terms of tissue distribution, expressed by the venom duct.

The protein resides in the secreted. Its function is as follows. Omega-conotoxins act at presynaptic membranes, they bind and block voltage-gated calcium channels (Cav). The sequence is that of Conotoxin Tx6.6 from Conus textile (Cloth-of-gold cone).